The sequence spans 493 residues: D-glyceraldehyde dehydrogenase (NADP(+)) (493 aa).

Positions 70–92 form a coiled coil; it reads RAKELIEKNRAELENIIMEENGK. NADP(+)-binding positions include 146–149, R157, 172–176, 204–210, 225–248, C281, and 381–383; these read TPWN, KPSSD, RGSEIGD, GSTATGQRIMQKASANMAKLILEL, and EIF. Substrate contacts are provided by N149 and R157. E247 acts as the Proton acceptor in catalysis. Substrate is bound at residue C281. Catalysis depends on C281, which acts as the Proton donor.

It belongs to the aldehyde dehydrogenase family. Glyceraldehyde dehydrogenase subfamily. As to quaternary structure, homotetramer. Dimer of dimers.

The catalysed reaction is D-glyceraldehyde + NADP(+) + H2O = (R)-glycerate + NADPH + 2 H(+). It participates in carbohydrate degradation; glycolysis. Its activity is regulated as follows. Inhibited by calcium, cadmium, copper and mercury ions. Stable for 2 hours at 60 degrees Celsius but activity is decreased to less than 50 percent within 20 minutes at 80 degrees Celsius. Two folds activity enhancement in the presence of 1 mM glutathione, DTT, or 2-mercaptoethanol. Complete activity inhibition by thiol-modifying reagents such as p-chloromercuribenzoic acid or p-hydroxy-mercuribenzoic acid. In terms of biological role, NADP-dependent dehydrogenase of the nED (non-phosphorylated Entner-Doudoroff) pathway with highest activity towards glyceraldehydes (e.g. D,L-glyceraldehyde and D-glyceraldehyde), to a lesser extent towards D,L-glyceraldehyde-3-phosphate and glycolaldehyde, but no activity towards aliphatic or aromatic aldehydes. This chain is D-glyceraldehyde dehydrogenase (NADP(+)), found in Thermoplasma acidophilum (strain ATCC 25905 / DSM 1728 / JCM 9062 / NBRC 15155 / AMRC-C165).